The chain runs to 144 residues: Ig heavy chain V region MOPC 141 (144 aa).

The signal sequence occupies residues Met1–Ser19. The region spanning Gln20–Thr130 is the Ig-like domain.

In Mus musculus (Mouse), this protein is Ig heavy chain V region MOPC 141.